The following is a 96-amino-acid chain: UPF0235 protein CKO_04329 (96 aa).

It belongs to the UPF0235 family.

This is UPF0235 protein CKO_04329 from Citrobacter koseri (strain ATCC BAA-895 / CDC 4225-83 / SGSC4696).